A 424-amino-acid chain; its full sequence is Glutamate-1-semialdehyde 2,1-aminomutase (424 aa).

K263 is modified (N6-(pyridoxal phosphate)lysine).

It belongs to the class-III pyridoxal-phosphate-dependent aminotransferase family. HemL subfamily. In terms of assembly, homodimer. It depends on pyridoxal 5'-phosphate as a cofactor.

It is found in the cytoplasm. It carries out the reaction (S)-4-amino-5-oxopentanoate = 5-aminolevulinate. It functions in the pathway porphyrin-containing compound metabolism; protoporphyrin-IX biosynthesis; 5-aminolevulinate from L-glutamyl-tRNA(Glu): step 2/2. The polypeptide is Glutamate-1-semialdehyde 2,1-aminomutase (Campylobacter jejuni subsp. jejuni serotype O:6 (strain 81116 / NCTC 11828)).